The primary structure comprises 257 residues: UPF0246 protein Ping_3037 (257 aa).

Belongs to the UPF0246 family.

The chain is UPF0246 protein Ping_3037 from Psychromonas ingrahamii (strain DSM 17664 / CCUG 51855 / 37).